The primary structure comprises 352 residues: MEGISIYTSDNYTEEMGSGDYDSIKEPCFREENAHFNRIFLPTIYSIIFLTGIVGNGLVILVMGYQKKLRSMTDKYRLHLSVADLLFVITLPFWAVDAVANWYFGKFLCKAVHVIYTVNLYSSVLILAFISLDRYLAIVHATNSQRPRKLLAEKVVYVGVWIPALLLTIPDFIFANVSEADDRYICDRFYPNDLWVVVFQFQHIMVGLILPGIVILSCYCIIISKLSHSKGHQKRKALKTTVILILAFFACWLPYYIGISIDSFILLEIIRQGCEFENTVHKWISITEALAFFHCCLNPILYAFLGAKFKTSAQHALTSVSRGSSLKILSKGKRGGHSSVSTESESSSFHSS.

The segment at 1–21 is important for chemokine binding and signaling; sequence MEGISIYTSDNYTEEMGSGDY. Over 1 to 38 the chain is Extracellular; it reads MEGISIYTSDNYTEEMGSGDYDSIKEPCFREENAHFNR. Y7 carries the sulfotyrosine modification. Residue N11 is glycosylated (N-linked (GlcNAc...) asparagine). Y12 carries the sulfotyrosine modification. The O-linked (Xyl...) (chondroitin sulfate) serine glycan is linked to S18. A Sulfotyrosine modification is found at Y21. 2 disulfides stabilise this stretch: C28–C274 and C109–C186. The chain crosses the membrane as a helical span at residues 39–63; that stretch reads IFLPTIYSIIFLTGIVGNGLVILVM. The Cytoplasmic segment spans residues 64–77; that stretch reads GYQKKLRSMTDKYR. The chain crosses the membrane as a helical span at residues 78–99; sequence LHLSVADLLFVITLPFWAVDAV. A chemokine binding region spans residues 94 to 97; it reads WAVD. Residues 100 to 110 are Extracellular-facing; the sequence is ANWYFGKFLCK. Residues 111-130 form a helical membrane-spanning segment; that stretch reads AVHVIYTVNLYSSVLILAFI. The interval 113 to 117 is chemokine binding; that stretch reads HVIYT. Residues 131 to 154 lie on the Cytoplasmic side of the membrane; the sequence is SLDRYLAIVHATNSQRPRKLLAEK. An Important for signaling motif is present at residues 133–135; that stretch reads DRY. The involved in dimerization; when bound to chemokine stretch occupies residues 135 to 147; it reads YLAIVHATNSQRP. A helical transmembrane segment spans residues 155–174; sequence VVYVGVWIPALLLTIPDFIF. Residues 175-195 are Extracellular-facing; that stretch reads ANVSEADDRYICDRFYPNDLW. Residues 186 to 190 are chemokine binding, important for signaling; the sequence is CDRFY. The involved in dimerization stretch occupies residues 191 to 210; that stretch reads PNDLWVVVFQFQHIMVGLIL. The chain crosses the membrane as a helical span at residues 196–216; it reads VVVFQFQHIMVGLILPGIVIL. The Cytoplasmic portion of the chain corresponds to 217 to 241; that stretch reads SCYCIIISKLSHSKGHQKRKALKTT. The helical transmembrane segment at 242–261 threads the bilayer; sequence VILILAFFACWLPYYIGISI. The Extracellular segment spans residues 262–282; the sequence is DSFILLEIIRQGCEFENTVHK. An involved in dimerization region spans residues 266–268; it reads LLE. Residues 283 to 302 form a helical membrane-spanning segment; the sequence is WISITEALAFFHCCLNPILY. Residues 303 to 352 lie on the Cytoplasmic side of the membrane; sequence AFLGAKFKTSAQHALTSVSRGSSLKILSKGKRGGHSSVSTESESSSFHSS. Phosphoserine occurs at positions 319 and 321. Residues S324 and S325 each carry the phosphoserine; by PKC and GRK6 modification. A disordered region spans residues 329-352; that stretch reads LSKGKRGGHSSVSTESESSSFHSS. S330 carries the phosphoserine; by GRK6 modification. K331 participates in a covalent cross-link: Glycyl lysine isopeptide (Lys-Gly) (interchain with G-Cter in ubiquitin). A compositionally biased stretch (low complexity) spans 337–352; the sequence is HSSVSTESESSSFHSS. A Phosphoserine; by GRK6 modification is found at S339. S348 and S351 each carry phosphoserine.

Belongs to the G-protein coupled receptor 1 family. As to quaternary structure, monomer. Can form homodimers. Interacts with CD164. Interacts with ARRB2; the interaction is dependent on the C-terminal phosphorylation of CXCR4 and allows activation of MAPK1 and MAPK3. Interacts with ARR3; the interaction is dependent on the C-terminal phosphorylation of CXCR4 and modulates calcium mobilization. Interacts with RNF113A; the interaction, enhanced by CXCL12, promotes CXCR4 ubiquitination and subsequent degradation. Interacts (via the cytoplasmic C-terminal) with ITCH (via the WW domains I and II); the interaction, enhanced by CXCL12, promotes CXCR4 ubiquitination and leads to its degradation. Interacts with extracellular ubiquitin. Interacts with DBN1; this interaction is enhanced by antigenic stimulation. Following LPS binding, may form a complex with GDF5, HSP90AA1 and HSPA8. Phosphorylated on agonist stimulation. Rapidly phosphorylated on serine and threonine residues in the C-terminal. Phosphorylation at Ser-324 and Ser-325 leads to recruitment of ITCH, ubiquitination and protein degradation. In terms of processing, ubiquitinated after ligand binding, leading to its degradation. Ubiquitinated by ITCH at the cell membrane on agonist stimulation. The ubiquitin-dependent mechanism, endosomal sorting complex required for transport (ESCRT), then targets CXCR4 for lysosomal degradation. This process is dependent also on prior Ser-/Thr-phosphorylation in the C-terminal of CXCR4. Also binding of ARRB1 to STAM negatively regulates CXCR4 sorting to lysosomes though modulating ubiquitination of SFR5S. Post-translationally, sulfation is required for efficient binding of CXCL12/SDF-1alpha and promotes its dimerization. O- and N-glycosylated. N-glycosylation can mask coreceptor function. The O-glycosylation chondroitin sulfate attachment does not affect interaction with CXCL12/SDF-1alpha nor its coreceptor activity.

It is found in the cell membrane. The protein localises to the cell junction. Its subcellular location is the early endosome. The protein resides in the late endosome. It localises to the lysosome. Its function is as follows. Receptor for the C-X-C chemokine CXCL12/SDF-1 that transduces a signal by increasing intracellular calcium ion levels and enhancing MAPK1/MAPK3 activation. Involved in the AKT signaling cascade. Plays a role in regulation of cell migration, e.g. during wound healing. Acts as a receptor for extracellular ubiquitin; leading to enhanced intracellular calcium ions and reduced cellular cAMP levels. Binds bacterial lipopolysaccharide (LPS) et mediates LPS-induced inflammatory response, including TNF secretion by monocytes. Involved in hematopoiesis and in cardiac ventricular septum formation. Also plays an essential role in vascularization of the gastrointestinal tract, probably by regulating vascular branching and/or remodeling processes in endothelial cells. Involved in cerebellar development. In the CNS, could mediate hippocampal-neuron survival. The protein is C-X-C chemokine receptor type 4 (CXCR4) of Saimiri sciureus (Common squirrel monkey).